A 244-amino-acid chain; its full sequence is MLPFWIALQFLSSLPVRLPGMPTPNEMGRSLLFYPVVGLLFGLLLWLASHLLQGAPAPLHAALLLALWVLLSGALHLDGLADSADAWLGGFGDRERTLQIMKDPRSGPIAVVVLVLVLLLKFCALWVLVERGTGGWLVLAPVVGRAAMLGLFMGTPYVRKGGLGAALAEHLPRRAAGWVLLGSVLGCVVLGGSPGLWMLLLSLGVFLWLRRLMCKRLGGTTGDTAGAMVELLELAVLVGLALMV.

Helical transmembrane passes span 31 to 51, 55 to 75, 109 to 129, 134 to 154, and 188 to 208; these read LLFY…ASHL, APAP…SGAL, IAVV…WVLV, GGWL…LFMG, and VVLG…VFLW.

It belongs to the CobS family. Mg(2+) serves as cofactor.

The protein resides in the cell inner membrane. The enzyme catalyses alpha-ribazole + adenosylcob(III)inamide-GDP = adenosylcob(III)alamin + GMP + H(+). It catalyses the reaction alpha-ribazole 5'-phosphate + adenosylcob(III)inamide-GDP = adenosylcob(III)alamin 5'-phosphate + GMP + H(+). It functions in the pathway cofactor biosynthesis; adenosylcobalamin biosynthesis; adenosylcobalamin from cob(II)yrinate a,c-diamide: step 7/7. Its function is as follows. Joins adenosylcobinamide-GDP and alpha-ribazole to generate adenosylcobalamin (Ado-cobalamin). Also synthesizes adenosylcobalamin 5'-phosphate from adenosylcobinamide-GDP and alpha-ribazole 5'-phosphate. The sequence is that of Adenosylcobinamide-GDP ribazoletransferase from Pseudomonas entomophila (strain L48).